Reading from the N-terminus, the 158-residue chain is Arginine repressor (158 aa).

Belongs to the ArgR family.

The protein localises to the cytoplasm. The protein operates within amino-acid biosynthesis; L-arginine biosynthesis [regulation]. Functionally, regulates arginine biosynthesis genes. This is Arginine repressor from Phocaeicola vulgatus (strain ATCC 8482 / DSM 1447 / JCM 5826 / CCUG 4940 / NBRC 14291 / NCTC 11154) (Bacteroides vulgatus).